A 310-amino-acid chain; its full sequence is Beta-ketoacyl-[acyl-carrier-protein] synthase III (310 aa).

Active-site residues include Cys116 and His239. The segment at Gln240–Arg244 is ACP-binding. The active site involves Asn269.

This sequence belongs to the thiolase-like superfamily. FabH family. In terms of assembly, homodimer.

The protein localises to the cytoplasm. It catalyses the reaction malonyl-[ACP] + acetyl-CoA + H(+) = 3-oxobutanoyl-[ACP] + CO2 + CoA. It functions in the pathway lipid metabolism; fatty acid biosynthesis. Functionally, catalyzes the condensation reaction of fatty acid synthesis by the addition to an acyl acceptor of two carbons from malonyl-ACP. Catalyzes the first condensation reaction which initiates fatty acid synthesis and may therefore play a role in governing the total rate of fatty acid production. Possesses both acetoacetyl-ACP synthase and acetyl transacylase activities. Its substrate specificity determines the biosynthesis of branched-chain and/or straight-chain of fatty acids. The sequence is that of Beta-ketoacyl-[acyl-carrier-protein] synthase III from Acholeplasma laidlawii (strain PG-8A).